A 107-amino-acid polypeptide reads, in one-letter code: uncharacterized protein (107 aa).

Helical transmembrane passes span 20–40 (FISL…EVGI), 49–69 (PAIL…ISTV), and 86–106 (VVML…KLFL).

The protein resides in the membrane. This is an uncharacterized protein from Saccharomyces cerevisiae (strain ATCC 204508 / S288c) (Baker's yeast).